We begin with the raw amino-acid sequence, 367 residues long: Riboflavin biosynthesis protein VVA0006 (367 aa).

Residue 215–219 participates in GTP binding; sequence RLHSE. 3 residues coordinate Zn(2+): C220, C231, and C233. Residues Q236, 258–260, and T280 each bind GTP; that span reads EGR. Residue D292 is the Proton acceptor of the active site. R294 (nucleophile) is an active-site residue. Positions 315 and 320 each coordinate GTP.

In the N-terminal section; belongs to the YbiA family. It in the C-terminal section; belongs to the GTP cyclohydrolase II family. Zn(2+) serves as cofactor.

The enzyme catalyses 2,5-diamino-6-hydroxy-4-(5-phosphoribosylamino)-pyrimidine + H2O = 2,5,6-triamino-4-hydroxypyrimidine + D-ribose 5-phosphate. The catalysed reaction is 5-amino-6-(5-phospho-D-ribosylamino)uracil + H2O = 5,6-diaminouracil + D-ribose 5-phosphate. It carries out the reaction GTP + 4 H2O = 2,5-diamino-6-hydroxy-4-(5-phosphoribosylamino)-pyrimidine + formate + 2 phosphate + 3 H(+). It participates in cofactor biosynthesis; riboflavin biosynthesis; 5-amino-6-(D-ribitylamino)uracil from GTP: step 1/4. Catalyzes the hydrolysis of the N-glycosidic bond in the first two intermediates of riboflavin biosynthesis, which are highly reactive metabolites, yielding relatively innocuous products. Thus, can divert a surplus of harmful intermediates into relatively harmless products and pre-empt the damage these intermediates would otherwise do. Has no activity against GTP, nucleoside monophosphates or ADP-ribose. In terms of biological role, catalyzes the conversion of GTP to 2,5-diamino-6-ribosylamino-4(3H)-pyrimidinone 5'-phosphate (DARP), formate and pyrophosphate. This Vibrio vulnificus (strain YJ016) protein is Riboflavin biosynthesis protein VVA0006.